Reading from the N-terminus, the 131-residue chain is Large ribosomal subunit protein bL21 (131 aa).

Over residues 106 to 116 (TIDDMPKKEAA) the composition is skewed to basic and acidic residues. Residues 106–131 (TIDDMPKKEAAPAKARRSTKKAAAAE) are disordered.

This sequence belongs to the bacterial ribosomal protein bL21 family. Part of the 50S ribosomal subunit. Contacts protein L20.

Functionally, this protein binds to 23S rRNA in the presence of protein L20. This is Large ribosomal subunit protein bL21 from Koribacter versatilis (strain Ellin345).